The chain runs to 544 residues: MNYVGLGLIIVLSCLWLGSNASDTDDPLLVQLPQGKLRGRDNGSYYSYESIPYAEPPTGDLRFEAPEPYKQKWSDIFDATKTPVACLQWDQFTPGANKLVGEEDCLTVSVYKPKNSKRNSFPVVAHIHGGAFMFGAAWQNGHENVMREGKFILVKISYRLGPLGFVSTGDRDLPGNYGLKDQRLALKWIKQNIASFGGEPQNVLLVGHSAGGASVHLQMLREDFGQLARAAFSFSGNALDPWVIQKGARGRAFELGRNVGCESAEDSTSLKKCLKSKPASELVTAVRKFLIFSYVPFAPFSPVLEPSDAPDAIITQDPRDVIKSGKFGQVPWAVSYVTEDGGYNAALLLKERKSGIVIDDLNERWLELAPYLLFYRDTKTKKDMDDYSRKIKQEYIGNQRFDIESYSELQRLFTDILFKNSTQESLDLHRKYGKSPAYAYVYDNPAEKGIAQVLANRTDYDFGTVHGDDYFLIFENFVRDVEMRPDEQIISRNFINMLADFASSDNGSLKYGECDFKDNVGSEKFQLLAIYIDGCQNRQHVEFP.

An N-terminal signal peptide occupies residues 1 to 21; it reads MNYVGLGLIIVLSCLWLGSNA. An N-linked (GlcNAc...) asparagine glycan is attached at N42. The cysteines at positions 86 and 105 are disulfide-linked. S209 functions as the Acyl-ester intermediate in the catalytic mechanism. Residues C261 and C273 are joined by a disulfide bond. Residues N420 and N456 are each glycosylated (N-linked (GlcNAc...) asparagine). H466 (charge relay system) is an active-site residue. N-linked (GlcNAc...) asparagine glycosylation occurs at N506. A disulfide bridge links C514 with C535.

Belongs to the type-B carboxylesterase/lipase family. As to quaternary structure, monomer. As to expression, specifically expressed in the ejaculatory bulbs of male.

The protein localises to the secreted. It carries out the reaction a carboxylic ester + H2O = an alcohol + a carboxylate + H(+). In terms of biological role, transferred from the ejaculatory bulbs of males to the female genitals upon copulation, plays an important role in the reproductive biology. The sequence is that of Esterase-6 (Est-6) from Drosophila melanogaster (Fruit fly).